Here is an 881-residue protein sequence, read N- to C-terminus: Squamosa promoter-binding-like protein 1 (881 aa).

A disordered region spans residues 49 to 69; it reads FPLGNSSNSSSSCSDEGNDKK. A compositionally biased stretch (low complexity) spans 53 to 62; the sequence is NSSNSSSSCS. A sufficient and necessary for DNA binding region spans residues 96–187; sequence PAKKTKSGAV…RKTNPEPGAN (92 aa). The SBP-type zinc-finger motif lies at 103 to 180; sequence GAVCQVENCE…AGHNKRRRKT (78 aa). C106, C111, C128, H131, C147, C150, H154, and C166 together coordinate Zn(2+). A Bipartite nuclear localization signal motif is present at residues 163 to 179; sequence KRSCRRRLAGHNKRRRK. Basic residues predominate over residues 170 to 179; that stretch reads LAGHNKRRRK. 2 disordered regions span residues 170–193 and 274–358; these read LAGHNKRRRKTNPEPGANGNPSDD and FSAR…EDAQ. Residues 275 to 284 show a composition bias toward polar residues; the sequence is SARQDGTATE. Positions 285 to 295 are enriched in basic and acidic residues; it reads NRSEKQVKMND. Over residues 319 to 338 the composition is skewed to polar residues; that stretch reads PATSSLDYPSWIHQSSPPQT. Over residues 339-356 the composition is skewed to low complexity; it reads SRNSDSASDQSPSSSSED.

Requires Zn(2+) as cofactor.

The protein localises to the nucleus. In terms of biological role, trans-acting factor that binds specifically to the consensus nucleotide sequence 5'-TNCGTACAA-3' of AP1 promoter. Binds specifically to the 5'-GTAC-3' core sequence. This chain is Squamosa promoter-binding-like protein 1 (SPL1), found in Arabidopsis thaliana (Mouse-ear cress).